The chain runs to 429 residues: Bifunctional protein GlmU (429 aa).

The tract at residues 1-223 (MKISVLILAA…EQDFMGVNDK (223 aa)) is pyrophosphorylase. Residues 8 to 11 (LAAG), Lys-22, Gln-74, and 81 to 82 (GT) each bind UDP-N-acetyl-alpha-D-glucosamine. Asp-102 is a Mg(2+) binding site. Residues Gly-135, Glu-149, Asn-164, and Asn-221 each contribute to the UDP-N-acetyl-alpha-D-glucosamine site. A Mg(2+)-binding site is contributed by Asn-221. The interval 224–244 (IELCLAQDLMQEAIKKEWMKQ) is linker. The segment at 245–429 (GVIFHMPATT…KDYFYTKFKK (185 aa)) is N-acetyltransferase. UDP-N-acetyl-alpha-D-glucosamine contacts are provided by Arg-308 and Lys-325. His-336 functions as the Proton acceptor in the catalytic mechanism. UDP-N-acetyl-alpha-D-glucosamine-binding residues include Tyr-339 and Asn-350. Acetyl-CoA is bound by residues 359–360 (NY), Ser-378, Ala-396, and Arg-413.

The protein in the N-terminal section; belongs to the N-acetylglucosamine-1-phosphate uridyltransferase family. In the C-terminal section; belongs to the transferase hexapeptide repeat family. As to quaternary structure, homotrimer. It depends on Mg(2+) as a cofactor.

It localises to the cytoplasm. It catalyses the reaction alpha-D-glucosamine 1-phosphate + acetyl-CoA = N-acetyl-alpha-D-glucosamine 1-phosphate + CoA + H(+). The catalysed reaction is N-acetyl-alpha-D-glucosamine 1-phosphate + UTP + H(+) = UDP-N-acetyl-alpha-D-glucosamine + diphosphate. Its pathway is nucleotide-sugar biosynthesis; UDP-N-acetyl-alpha-D-glucosamine biosynthesis; N-acetyl-alpha-D-glucosamine 1-phosphate from alpha-D-glucosamine 6-phosphate (route II): step 2/2. The protein operates within nucleotide-sugar biosynthesis; UDP-N-acetyl-alpha-D-glucosamine biosynthesis; UDP-N-acetyl-alpha-D-glucosamine from N-acetyl-alpha-D-glucosamine 1-phosphate: step 1/1. It functions in the pathway bacterial outer membrane biogenesis; LPS lipid A biosynthesis. Catalyzes the last two sequential reactions in the de novo biosynthetic pathway for UDP-N-acetylglucosamine (UDP-GlcNAc). The C-terminal domain catalyzes the transfer of acetyl group from acetyl coenzyme A to glucosamine-1-phosphate (GlcN-1-P) to produce N-acetylglucosamine-1-phosphate (GlcNAc-1-P), which is converted into UDP-GlcNAc by the transfer of uridine 5-monophosphate (from uridine 5-triphosphate), a reaction catalyzed by the N-terminal domain. The chain is Bifunctional protein GlmU from Campylobacter lari (strain RM2100 / D67 / ATCC BAA-1060).